The primary structure comprises 437 residues: Magnetosome protein MamN (437 aa).

Helical transmembrane passes span 26–46, 53–73, 95–115, 136–156, 174–194, 229–249, 252–268, 281–301, 320–340, 358–378, and 416–436; these read LAVL…GTYT, SIYF…ALLA, WILV…NSLI, VPVI…TMIG, FIGG…LFFE, YGLI…PLKV, GWIA…LGRF, DILF…VGIL, AILL…GTSA, AAWW…LSGA, and WGLP…AVLA.

The protein belongs to the arsenite-antimonite (ArsB) efflux (TC 2.A.45) family.

Its subcellular location is the magnetosome membrane. Its function is as follows. Plays a role in biomineralization; might regulate pH in the magnetosome. The protein is Magnetosome protein MamN of Magnetospirillum gryphiswaldense (strain DSM 6361 / JCM 21280 / NBRC 15271 / MSR-1).